A 2202-amino-acid polypeptide reads, in one-letter code: Nonribosomal peptide synthetase 5 (2202 aa).

The tract at residues 58 to 443 (TYAQLDALSD…LLSYDKVDSA (386 aa)) is adenylation 1. Residues 517–593 (ERGLGAVESV…NIAAAVVELS (77 aa)) enclose the Carrier 1 domain. Position 554 is an O-(pantetheine 4'-phosphoryl)serine (Ser-554). The tract at residues 625–918 (IAPMTDMQTR…INTLPLAINT (294 aa)) is condensation 1. Residues 1105-1482 (TYREFGRMTE…EVQSTISKLA (378 aa)) form an adenylation 2 region. Positions 1563 to 1643 (DLETDTQRVL…DLSLAIDELV (81 aa)) constitute a Carrier 2 domain. Ser-1602 carries the O-(pantetheine 4'-phosphoryl)serine modification. The condensation 2 stretch occupies residues 1664-1952 (GQLPLSYLEK…FLDRLLLRIQ (289 aa)). Positions 2103 to 2129 (PVGLTPSHEGSAELTNGTNKTDSTTGQ) are disordered. Positions 2115 to 2129 (ELTNGTNKTDSTTGQ) are enriched in polar residues. The 73-residue stretch at 2130–2202 (QELENNLTDV…LELATCAVII (73 aa)) folds into the Carrier 3 domain. Ser-2164 is modified (O-(pantetheine 4'-phosphoryl)serine).

The protein belongs to the NRP synthetase family.

Its function is as follows. Nonribosomal peptide synthesis (NRPS) is a key mechanism responsible for the biosynthesis of bioactive metabolites which are potentially contributing to organismal virulence. This chain is Nonribosomal peptide synthetase 5 (NRPS5), found in Aspergillus fumigatus (strain ATCC MYA-4609 / CBS 101355 / FGSC A1100 / Af293) (Neosartorya fumigata).